Here is a 503-residue protein sequence, read N- to C-terminus: Puromycin resistance protein pur8 (503 aa).

The Cytoplasmic portion of the chain corresponds to 1–24 (MARKPDISAVPVESAACQGPDPRR). The helical transmembrane segment at 25–45 (WWGLVVILAAQLLVVLDGTVV) threads the bilayer. Topologically, residues 46–64 (NIALPSVQRDLGMSDTSRQ) are extracellular. Residues 65–85 (WVITAYTLAFGGLLLLGGRVA) form a helical membrane-spanning segment. Residues 86–92 (DAFGRRR) are Cytoplasmic-facing. A helical transmembrane segment spans residues 93–113 (IFAVGILGFGLASLLGGAAPD). The Extracellular portion of the chain corresponds to 114–122 (PGTLFLARA). A helical membrane pass occupies residues 123 to 143 (LQGVFAAALAPAALALINTLF). At 144–152 (TEPGERGKA) the chain is on the cytoplasmic side. A helical membrane pass occupies residues 153–173 (FGVYGAVSGGGAAVGLLAGGL). Residues 174–181 (LTEYLDWR) are Extracellular-facing. A helical transmembrane segment spans residues 182 to 202 (WCLYVNAPVALLALLGCRLLP). At 203 to 212 (RDRRTGRAVR) the chain is on the cytoplasmic side. A helical membrane pass occupies residues 213–233 (LDLPGTLLGCGGLVAIVYAFA). At 234–241 (EAESGWGD) the chain is on the extracellular side. A helical membrane pass occupies residues 242–262 (PLVVRLLVLGVLMLVAFALVE). Topologically, residues 263-280 (RRVQDPLLPPGVVAHRVR) are cytoplasmic. Residues 281-301 (GGSFLVVGLPQIGLFGLFLFL) form a helical membrane-spanning segment. Over 302-313 (TYYLQGILDYSP) the chain is Extracellular. Residues 314-334 (VLTGVAFLPLGLGIAVGSSLI) traverse the membrane as a helical segment. Topologically, residues 335-346 (AARLLPRTRPRT) are cytoplasmic. The chain crosses the membrane as a helical span at residues 347–367 (LIVGALLAAAAGMALLTRLEP). Topologically, residues 368-371 (DTPQ) are extracellular. A helical membrane pass occupies residues 372–392 (VYLTHLLPAQILIGLGIGCMM). Topologically, residues 393–422 (MPAMHTATARVAPHEAGAAAAVVNSAQQVG) are cytoplasmic. Residues 423-443 (GALGVALLNTVSTGATAAYLA) form a helical membrane-spanning segment. Topologically, residues 444-461 (DHGTSPAATVDGTVHGYT) are extracellular. Residues 462–482 (VAIAFAVGVLLLTAVLAWVLI) traverse the membrane as a helical segment. Residues 483–503 (DSRTEAADETGSASVTPARPR) are Cytoplasmic-facing.

This sequence belongs to the major facilitator superfamily. EmrB family.

It is found in the cell membrane. In terms of biological role, may be involved in active puromycin efflux energized by a proton-dependent electrochemical gradient. In addition, it could be implicated in secreting N-acetylpuromycin, the last intermediate of the puromycin biosynthesis pathway, to the environment. The chain is Puromycin resistance protein pur8 (pur8) from Streptomyces alboniger.